A 213-amino-acid polypeptide reads, in one-letter code: Adenylate kinase (213 aa).

Residue 10-15 coordinates ATP; that stretch reads GSGKGT. Residues 30-59 are NMP; it reads STGDLFRTNIENDTPLGKEIKQIVENGQLV. Residues T31, R36, 57–59, 85–88, and Q92 contribute to the AMP site; these read QLV and GFPR. An LID region spans residues 121–158; it reads GRRICQSCCKIFNIYTLPTKEKEICDFCQGILYQRKDD. R122 provides a ligand contact to ATP. Positions 125 and 128 each coordinate Zn(2+). ATP is bound at residue 131–132; that stretch reads IF. The Zn(2+) site is built by C145 and C148. R155 and R166 together coordinate AMP. Residue K194 coordinates ATP.

This sequence belongs to the adenylate kinase family. As to quaternary structure, monomer.

The protein localises to the cytoplasm. The catalysed reaction is AMP + ATP = 2 ADP. It functions in the pathway purine metabolism; AMP biosynthesis via salvage pathway; AMP from ADP: step 1/1. Catalyzes the reversible transfer of the terminal phosphate group between ATP and AMP. Plays an important role in cellular energy homeostasis and in adenine nucleotide metabolism. The protein is Adenylate kinase of Borrelia duttonii (strain Ly).